Here is a 381-residue protein sequence, read N- to C-terminus: Homoserine O-succinyltransferase (381 aa).

Positions Asn45–Asp360 constitute an AB hydrolase-1 domain. Catalysis depends on Ser151, which acts as the Nucleophile. A substrate-binding site is contributed by Arg221. Residues Asp321 and His354 contribute to the active site. Asp355 lines the substrate pocket.

The protein belongs to the AB hydrolase superfamily. MetX family. Homodimer.

The protein localises to the cytoplasm. It carries out the reaction L-homoserine + succinyl-CoA = O-succinyl-L-homoserine + CoA. It functions in the pathway amino-acid biosynthesis; L-methionine biosynthesis via de novo pathway; O-succinyl-L-homoserine from L-homoserine: step 1/1. Its function is as follows. Transfers a succinyl group from succinyl-CoA to L-homoserine, forming succinyl-L-homoserine. This Burkholderia ambifaria (strain MC40-6) protein is Homoserine O-succinyltransferase.